Reading from the N-terminus, the 217-residue chain is UPF0502 protein VIBHAR_05349 (217 aa).

This sequence belongs to the UPF0502 family.

The chain is UPF0502 protein VIBHAR_05349 from Vibrio campbellii (strain ATCC BAA-1116).